The sequence spans 178 residues: Ribosome rescue factor SmrB (178 aa).

The region spanning 99-174 (LDLHGLTQMQ…GNAALLILIE (76 aa)) is the Smr domain.

The protein belongs to the SmrB family. Associates with collided ribosomes, but not with correctly translating polysomes.

Functionally, acts as a ribosome collision sensor. Detects stalled/collided disomes (pairs of ribosomes where the leading ribosome is stalled and a second ribosome has collided with it) and endonucleolytically cleaves mRNA at the 5' boundary of the stalled ribosome. Stalled/collided disomes form a new interface (primarily via the 30S subunits) that binds SmrB. Cleaved mRNA becomes available for tmRNA ligation, leading to ribosomal subunit dissociation and rescue of stalled ribosomes. The protein is Ribosome rescue factor SmrB of Photorhabdus laumondii subsp. laumondii (strain DSM 15139 / CIP 105565 / TT01) (Photorhabdus luminescens subsp. laumondii).